Consider the following 406-residue polypeptide: uncharacterized protein (406 aa).

Transmembrane regions (helical) follow at residues 7–27, 31–51, 65–85, 92–112, and 191–211; these read LCTN…YYLF, YFNI…YGSV, LIFI…SEII, IFYF…SFIL, and ISLI…SSFF. The disordered stretch occupies residues 259–331; the sequence is TLNVPISTNN…TGTNNNVVDN (73 aa). The span at 262–291 shows a compositional bias: polar residues; the sequence is VPISTNNTDNLNSVKTNQQFNTPVAKSNTK. Over residues 292–303 the composition is skewed to basic residues; sequence SNRRKKTGKKIR. Residues 306–318 are compositionally biased toward low complexity; sequence NQTTSSNSSNNQS. Polar residues predominate over residues 319 to 330; that stretch reads PESTGTNNNVVD.

It localises to the membrane. This is an uncharacterized protein from Acanthamoeba polyphaga (Amoeba).